The primary structure comprises 1037 residues: Huntingtin-interacting protein 1 (1037 aa).

One can recognise an ENTH domain in the interval 32–160 (ERESFERTQT…EYHTKNPRFP (129 aa)). The residue at position 338 (Ser-338) is a Phosphoserine. Residues 368 to 644 (VNKDEKDHLI…IQDALNQLEE (277 aa)) are a coiled coil. The segment at 410–491 (SELEADLAEQ…HADLLRKNAE (82 aa)) is pDED. The I/LWEQ domain maps to 771-1012 (GLDIKQEELG…ELRKKHYELA (242 aa)). Positions 867-924 (RWTEGLISASKAVGWGATVMVDAADLVVQGRGKFEELMVCSHEIAASTAQLVAASKVK) are important for actin binding. The interval 1017 to 1037 (GWEEGTEASPPTLQEVVTEKE) is disordered.

It belongs to the SLA2 family. Homodimer. Binds actin. Binds HTT (via N-terminus). This interaction is restricted to the brain. Binds to IFT57. In normal conditions, it poorly interacts with IFT57, HIP1 being strongly associated with HTT. However, in mutant HTT proteins with a long poly-Gln region, interaction between HTT and HIP1 is inhibited, promoting the interaction between HIP1 and IFT57. Interacts with CLTB (via N-terminus). Interacts (via coiled coil domain) with AR. Interacts with AP2A1, AP2A2, CLTC and HIP1R. Interacts with GRIA1, GRIN2A and GRIN2B. As to expression, ubiquitously expressed with the highest level in brain. Expression is up-regulated in prostate and colon cancer.

It is found in the cytoplasm. The protein resides in the nucleus. Its subcellular location is the endomembrane system. It localises to the cytoplasmic vesicle. The protein localises to the clathrin-coated vesicle membrane. Functionally, plays a role in clathrin-mediated endocytosis and trafficking. Involved in regulating AMPA receptor trafficking in the central nervous system in an NMDA-dependent manner. Regulates presynaptic nerve terminal activity. Enhances androgen receptor (AR)-mediated transcription. May act as a proapoptotic protein that induces cell death by acting through the intrinsic apoptosis pathway. Binds 3-phosphoinositides (via ENTH domain). May act through the ENTH domain to promote cell survival by stabilizing receptor tyrosine kinases following ligand-induced endocytosis. May play a functional role in the cell filament networks. May be required for differentiation, proliferation, and/or survival of somatic and germline progenitors. This Homo sapiens (Human) protein is Huntingtin-interacting protein 1 (HIP1).